The primary structure comprises 251 residues: Adapter protein MecA (251 aa).

It belongs to the MecA family. As to quaternary structure, homodimer.

In terms of biological role, enables the recognition and targeting of unfolded and aggregated proteins to the ClpC protease or to other proteins involved in proteolysis. This is Adapter protein MecA from Streptococcus agalactiae serotype Ia (strain ATCC 27591 / A909 / CDC SS700).